A 192-amino-acid polypeptide reads, in one-letter code: Phosphoheptose isomerase (192 aa).

The SIS domain occupies leucine 37–lysine 192. Substrate is bound at residue asparagine 52 to glycine 54. Positions 61 and 65 each coordinate Zn(2+). Residues glutamate 65, asparagine 93–aspartate 94, serine 119–serine 121, serine 124, and glutamine 172 each bind substrate. Zn(2+)-binding residues include glutamine 172 and histidine 180.

This sequence belongs to the SIS family. GmhA subfamily. In terms of assembly, homotetramer. It depends on Zn(2+) as a cofactor.

The protein resides in the cytoplasm. The catalysed reaction is 2 D-sedoheptulose 7-phosphate = D-glycero-alpha-D-manno-heptose 7-phosphate + D-glycero-beta-D-manno-heptose 7-phosphate. It functions in the pathway carbohydrate biosynthesis; D-glycero-D-manno-heptose 7-phosphate biosynthesis; D-glycero-alpha-D-manno-heptose 7-phosphate and D-glycero-beta-D-manno-heptose 7-phosphate from sedoheptulose 7-phosphate: step 1/1. Its function is as follows. Catalyzes the isomerization of sedoheptulose 7-phosphate in D-glycero-D-manno-heptose 7-phosphate. This is Phosphoheptose isomerase from Salmonella dublin (strain CT_02021853).